A 124-amino-acid polypeptide reads, in one-letter code: Succinate dehydrogenase cytochrome b556 subunit (124 aa).

At 1-29 (MTKTKQEIYNKRPTSPHLSIYKLQISSTL) the chain is on the cytoplasmic side. A helical membrane pass occupies residues 30–55 (SILHRMTGVALFFAVSILAWWLILSK). The Periplasmic portion of the chain corresponds to 56–67 (YDNNYLQFANCC). The helical transmembrane segment at 68–88 (IIKICLVAVSYAWFYHLCNGI) threads the bilayer. Residue histidine 83 participates in heme binding. Over 89–103 (RHLFWDIGYGFSIKA) the chain is Cytoplasmic. A helical membrane pass occupies residues 104–124 (VNITGWCVVVCSILLTMLLWV).

Belongs to the cytochrome b560 family. As to quaternary structure, part of an enzyme complex containing four subunits: a flavoprotein, an iron-sulfur protein, plus two membrane-anchoring proteins, SdhC and SdhD. The complex can form homotrimers. The cofactor is heme.

Its subcellular location is the cell inner membrane. Its pathway is carbohydrate metabolism; tricarboxylic acid cycle. Membrane-anchoring subunit of succinate dehydrogenase (SDH). This Rickettsia felis (strain ATCC VR-1525 / URRWXCal2) (Rickettsia azadi) protein is Succinate dehydrogenase cytochrome b556 subunit (sdhC).